Consider the following 472-residue polypeptide: MDYLPLFADLKQRPVLIVGGGEVAARKIELLHRAGAQVWVVAQTLSSELEQQYQDGRIHWLAQDFLPEQLDNVFLVIAATNDTVLNAAVFAAADQRCILANVVDDQPLCSFIFPSIVDRSPLVVAISSSGQAPVLARILREKLEALLPTRLSDMAAIAGRWRGRVKQHMASMGERRRFWEHAFSGRFASLISRGQLTEAENELQLSLEGQHRALGEVALVGAGPGDAGLLTLRGLQVMQQADVVLYDHLVSPEVLDLVRRDAERICVGKRAGAHSVTQEATNQLLVTLAQQGKRVVRLKGGDPFIFGRGGEELQVVAQAGIPFQVVPGVTAAAGATAYAGIPLTHRDHAQSVTFITGHCRPDGDDLDWQTLARGRQTLAIYMGTVKAAAISQQLIAHGRSSTTPVAVIGRGTRVDQQVLIGTLAQLESLAQQAPTPALLVIGEVVNLHHQIAWFGQQPQTESAISPSVVNLA.

The interval 1-203 (MDYLPLFADL…GQLTEAENEL (203 aa)) is precorrin-2 dehydrogenase /sirohydrochlorin ferrochelatase. Residues 22-23 (EV) and 43-44 (QT) contribute to the NAD(+) site. Position 128 is a phosphoserine (Ser-128). The uroporphyrinogen-III C-methyltransferase stretch occupies residues 215–472 (GEVALVGAGP…AISPSVVNLA (258 aa)). Pro-224 lines the S-adenosyl-L-methionine pocket. Asp-247 (proton acceptor) is an active-site residue. The active-site Proton donor is Lys-269. Residues 300–302 (GGD), Ile-305, 330–331 (TA), Met-382, and Gly-411 contribute to the S-adenosyl-L-methionine site.

This sequence in the N-terminal section; belongs to the precorrin-2 dehydrogenase / sirohydrochlorin ferrochelatase family. In the C-terminal section; belongs to the precorrin methyltransferase family.

It catalyses the reaction uroporphyrinogen III + 2 S-adenosyl-L-methionine = precorrin-2 + 2 S-adenosyl-L-homocysteine + H(+). It carries out the reaction precorrin-2 + NAD(+) = sirohydrochlorin + NADH + 2 H(+). The enzyme catalyses siroheme + 2 H(+) = sirohydrochlorin + Fe(2+). The protein operates within cofactor biosynthesis; adenosylcobalamin biosynthesis; precorrin-2 from uroporphyrinogen III: step 1/1. Its pathway is cofactor biosynthesis; adenosylcobalamin biosynthesis; sirohydrochlorin from precorrin-2: step 1/1. It participates in porphyrin-containing compound metabolism; siroheme biosynthesis; precorrin-2 from uroporphyrinogen III: step 1/1. It functions in the pathway porphyrin-containing compound metabolism; siroheme biosynthesis; siroheme from sirohydrochlorin: step 1/1. The protein operates within porphyrin-containing compound metabolism; siroheme biosynthesis; sirohydrochlorin from precorrin-2: step 1/1. Its function is as follows. Multifunctional enzyme that catalyzes the SAM-dependent methylations of uroporphyrinogen III at position C-2 and C-7 to form precorrin-2 via precorrin-1. Then it catalyzes the NAD-dependent ring dehydrogenation of precorrin-2 to yield sirohydrochlorin. Finally, it catalyzes the ferrochelation of sirohydrochlorin to yield siroheme. The chain is Siroheme synthase 1 from Yersinia pestis bv. Antiqua (strain Nepal516).